Here is a 116-residue protein sequence, read N- to C-terminus: NADH dehydrogenase [ubiquinone] 1 alpha subcomplex subunit 5 (116 aa).

Position 2 is an N-acetylalanine (Ala2). N6-acetyllysine is present on residues Lys30, Lys46, and Lys60. The residue at position 89 (Ser89) is a Phosphoserine. The residue at position 98 (Lys98) is an N6-acetyllysine; alternate. N6-succinyllysine; alternate is present on Lys98.

The protein belongs to the complex I NDUFA5 subunit family. In terms of assembly, complex I is composed of 45 different subunits.

The protein resides in the mitochondrion inner membrane. Its function is as follows. Accessory subunit of the mitochondrial membrane respiratory chain NADH dehydrogenase (Complex I), that is believed not to be involved in catalysis. Complex I functions in the transfer of electrons from NADH to the respiratory chain. The immediate electron acceptor for the enzyme is believed to be ubiquinone. The chain is NADH dehydrogenase [ubiquinone] 1 alpha subcomplex subunit 5 (NDUFA5) from Macaca fascicularis (Crab-eating macaque).